The following is a 483-amino-acid chain: Cysteine proteinase 1, mitochondrial (483 aa).

A mitochondrion-targeting transit peptide spans Met1 to Met30. Residues Cys102, His398, and Asn421 contribute to the active site. Position 483 (Lys483) is a propeptide, removed in mature form; by autocatalysis.

Belongs to the peptidase C1 family. As to quaternary structure, homohexamer. Binds to nucleic acids. Binds single-stranded DNA and RNA with higher affinity than double-stranded DNA. In terms of processing, the N-terminus of isoform Cytoplasmic is blocked.

The protein resides in the mitochondrion. It localises to the cytoplasm. The catalysed reaction is Inactivates bleomycin B2 (a cytotoxic glycometallopeptide) by hydrolysis of a carboxyamide bond of beta-aminoalanine, but also shows general aminopeptidase activity. The specificity varies somewhat with source, but amino acid arylamides of Met, Leu and Ala are preferred.. Inhibited by E64, a specific inhibitor of cysteine proteases, N-ethylmaleimide, iodacetamide, and mercury and zinc ions. The normal physiological role of the enzyme is unknown, but it is not essential for the viability of yeast cells. Has aminopeptidase activity, shortening substrate peptides sequentially by 1 amino acid. Has bleomycin hydrolase activity, which can protect the cell from the toxic effects of bleomycin. Has homocysteine-thiolactonase activity, protecting the cell against homocysteine toxicity. Acts as a repressor in the GAL4 regulatory system, but this does not require either the peptidase or nucleic acid-binding activities. This is Cysteine proteinase 1, mitochondrial (LAP3) from Saccharomyces cerevisiae (strain JAY291) (Baker's yeast).